Consider the following 379-residue polypeptide: Alcohol dehydrogenase class-3 (379 aa).

Ala2 bears the N-acetylalanine mark. Cys47 is a binding site for Zn(2+). His48 provides a ligand contact to NAD(+). Positions 49 and 69 each coordinate an alcohol. Zn(2+) contacts are provided by His69, Glu70, Cys99, Cys102, Cys105, Cys113, and Cys177. NAD(+) contacts are provided by residues 202–207 (GLGTVG), Asp226, Lys231, Ile272, 295–297 (VGV), 320–322 (TAF), and Arg372.

It belongs to the zinc-containing alcohol dehydrogenase family. Class-III subfamily. Homodimer. Zn(2+) is required as a cofactor. Ubiquitous.

Its subcellular location is the cytoplasm. The catalysed reaction is a primary alcohol + NAD(+) = an aldehyde + NADH + H(+). It catalyses the reaction a secondary alcohol + NAD(+) = a ketone + NADH + H(+). It carries out the reaction S-(hydroxymethyl)glutathione + NADP(+) = S-formylglutathione + NADPH + H(+). The enzyme catalyses S-(hydroxymethyl)glutathione + NAD(+) = S-formylglutathione + NADH + H(+). The catalysed reaction is S-nitrosoglutathione + NADH + H(+) = S-(hydroxysulfenamide)glutathione + NAD(+). With respect to regulation, repressed by thiol-modifying agents N-ethylmaleimide (NEM) and 5,5-dithio-bis-(2-nitrobenzoic acid) (DTNB), as well as by methyl methanethiosulfonate (MMTS) in a dose-dependent manner. Inhibited by hydrogen peroxide H(2)O(2). In terms of biological role, alcohol dehydrogenase catalyzing the reduction of nitrosoglutathione. Can also use long-chain alcohols including cinnamyl alcohol and geraniol, and, to a lower extent, octanol. Plays a central role in formaldehyde detoxification. Not able to use ethanol (EtOH) as substrate. The protein is Alcohol dehydrogenase class-3 of Arabidopsis thaliana (Mouse-ear cress).